Here is a 277-residue protein sequence, read N- to C-terminus: UPF0276 protein PP_0992 (277 aa).

The protein belongs to the UPF0276 family.

The sequence is that of UPF0276 protein PP_0992 from Pseudomonas putida (strain ATCC 47054 / DSM 6125 / CFBP 8728 / NCIMB 11950 / KT2440).